The chain runs to 363 residues: LIM and cysteine-rich domains protein 1 (363 aa).

S16 is subject to Phosphoserine. In terms of domain architecture, PET spans 99–206 (MIMTNPIATG…GEVALPGQGG (108 aa)). Residues 200–234 (ALPGQGGLPKEEGKQQEKPEGAETAPPTTNGSIGD) are disordered. Basic and acidic residues predominate over residues 208–220 (PKEEGKQQEKPEG). 2 consecutive LIM zinc-binding domains span residues 239–304 (YVCE…SLRP) and 305–363 (RCSG…SKRS).

Interacts with beta-dystroglycan. Interacts with GATA1, GATA4 and GATA6.

Its subcellular location is the cytoplasm. It localises to the nucleus. Transcriptional cofactor that restricts GATA6 function by inhibiting DNA-binding, resulting in repression of GATA6 transcriptional activation of downstream target genes. Represses GATA6-mediated trans activation of lung- and cardiac tissue-specific promoters. Inhibits DNA-binding by GATA4 and GATA1 to the cTNC promoter. Plays a critical role in the development of cardiac hypertrophy via activation of calcineurin/nuclear factor of activated T-cells signaling pathway. The chain is LIM and cysteine-rich domains protein 1 (LMCD1) from Bos taurus (Bovine).